Reading from the N-terminus, the 272-residue chain is Phosphate import ATP-binding protein PstB (272 aa).

An ABC transporter domain is found at Val-18–Ser-257. Gly-50–Ser-57 is a binding site for ATP.

This sequence belongs to the ABC transporter superfamily. Phosphate importer (TC 3.A.1.7) family. The complex is composed of two ATP-binding proteins (PstB), two transmembrane proteins (PstC and PstA) and a solute-binding protein (PstS).

The protein resides in the cell inner membrane. The catalysed reaction is phosphate(out) + ATP + H2O = ADP + 2 phosphate(in) + H(+). Part of the ABC transporter complex PstSACB involved in phosphate import. Responsible for energy coupling to the transport system. The protein is Phosphate import ATP-binding protein PstB of Synechococcus sp. (strain CC9902).